The primary structure comprises 430 residues: Adenylosuccinate synthetase (430 aa).

Residues 12–18 and 40–42 each bind GTP; these read GDEGKGK and GHT. Aspartate 13 functions as the Proton acceptor in the catalytic mechanism. Residues aspartate 13 and glycine 40 each coordinate Mg(2+). Residues 13–16, 38–41, threonine 130, arginine 144, glutamine 224, threonine 239, and arginine 303 contribute to the IMP site; these read DEGK and NAGH. Histidine 41 (proton donor) is an active-site residue. Residue 299 to 305 coordinates substrate; that stretch reads VNTGRKR. Residues arginine 305, 331–333, and 413–415 contribute to the GTP site; these read KLD and STS.

This sequence belongs to the adenylosuccinate synthetase family. As to quaternary structure, homodimer. Requires Mg(2+) as cofactor.

The protein resides in the cytoplasm. The enzyme catalyses IMP + L-aspartate + GTP = N(6)-(1,2-dicarboxyethyl)-AMP + GDP + phosphate + 2 H(+). Its pathway is purine metabolism; AMP biosynthesis via de novo pathway; AMP from IMP: step 1/2. Its function is as follows. Plays an important role in the de novo pathway of purine nucleotide biosynthesis. Catalyzes the first committed step in the biosynthesis of AMP from IMP. The sequence is that of Adenylosuccinate synthetase from Rhodopseudomonas palustris (strain BisA53).